A 212-amino-acid chain; its full sequence is Golgi SNAP receptor complex member 2 homolog memb-1 (212 aa).

Topologically, residues Met1–Asp189 are cytoplasmic. Residues Trp190 to Trp210 form a helical; Anchor for type IV membrane protein membrane-spanning segment. Residues Arg211–Gly212 lie on the Vesicular side of the membrane.

It belongs to the GOSR2 family. As to quaternary structure, part of a unique SNARE complex.

Its subcellular location is the golgi apparatus. It is found in the cis-Golgi network membrane. The protein resides in the golgi apparatus membrane. The protein localises to the endoplasmic reticulum membrane. Its function is as follows. Involved in transport of proteins from the cis/medial-Golgi to the trans-Golgi network. This is Golgi SNAP receptor complex member 2 homolog memb-1 from Caenorhabditis briggsae.